The chain runs to 44 residues: Photosystem I reaction center subunit IX (44 aa).

Residues 7 to 27 form a helical membrane-spanning segment; the sequence is YLSVAPVISTLWFGSLAGLLI.

This sequence belongs to the PsaJ family.

The protein resides in the plastid. It localises to the chloroplast thylakoid membrane. In terms of biological role, may help in the organization of the PsaE and PsaF subunits. This Ceratophyllum demersum (Rigid hornwort) protein is Photosystem I reaction center subunit IX.